We begin with the raw amino-acid sequence, 555 residues long: Glucose-6-phosphate isomerase (555 aa).

The active-site Proton donor is glutamate 360. Catalysis depends on residues histidine 391 and lysine 519.

This sequence belongs to the GPI family.

It localises to the cytoplasm. The catalysed reaction is alpha-D-glucose 6-phosphate = beta-D-fructose 6-phosphate. It participates in carbohydrate biosynthesis; gluconeogenesis. The protein operates within carbohydrate degradation; glycolysis; D-glyceraldehyde 3-phosphate and glycerone phosphate from D-glucose: step 2/4. In terms of biological role, catalyzes the reversible isomerization of glucose-6-phosphate to fructose-6-phosphate. The polypeptide is Glucose-6-phosphate isomerase (Acinetobacter baumannii (strain AB307-0294)).